The sequence spans 232 residues: Pyridoxine 5'-phosphate synthase (232 aa).

Asparagine 7 lines the 3-amino-2-oxopropyl phosphate pocket. 1-deoxy-D-xylulose 5-phosphate is bound at residue 9–10 (DH). Arginine 18 provides a ligand contact to 3-amino-2-oxopropyl phosphate. Histidine 43 acts as the Proton acceptor in catalysis. 1-deoxy-D-xylulose 5-phosphate contacts are provided by arginine 45 and histidine 50. Glutamate 69 acts as the Proton acceptor in catalysis. Threonine 99 contributes to the 1-deoxy-D-xylulose 5-phosphate binding site. The active-site Proton donor is histidine 185. 3-amino-2-oxopropyl phosphate is bound by residues glycine 186 and 207-208 (GH).

This sequence belongs to the PNP synthase family. As to quaternary structure, homooctamer; tetramer of dimers.

Its subcellular location is the cytoplasm. It catalyses the reaction 3-amino-2-oxopropyl phosphate + 1-deoxy-D-xylulose 5-phosphate = pyridoxine 5'-phosphate + phosphate + 2 H2O + H(+). Its pathway is cofactor biosynthesis; pyridoxine 5'-phosphate biosynthesis; pyridoxine 5'-phosphate from D-erythrose 4-phosphate: step 5/5. In terms of biological role, catalyzes the complicated ring closure reaction between the two acyclic compounds 1-deoxy-D-xylulose-5-phosphate (DXP) and 3-amino-2-oxopropyl phosphate (1-amino-acetone-3-phosphate or AAP) to form pyridoxine 5'-phosphate (PNP) and inorganic phosphate. This chain is Pyridoxine 5'-phosphate synthase, found in Gluconobacter oxydans (strain 621H) (Gluconobacter suboxydans).